We begin with the raw amino-acid sequence, 327 residues long: Movement protein (327 aa).

Positions 297-327 form a coiled coil; that stretch reads SASSSNTENELARVSQNIDLLKNKLKEICGE.

This sequence belongs to the caulimoviridae movement protein family. As to quaternary structure, homotrimer, through the coiled-coil domain. Interacts with VAP. May interact (via N-terminus) with host prenylated Rab acceptor protein 1D (PRA1D).

Its subcellular location is the host cell junction. The protein localises to the host plasmodesma. In terms of biological role, transports viral genome to neighboring plant cells directly through plasmosdesmata, without any budding. The movement protein allows efficient cell to cell propagation, by bypassing the host cell wall barrier. Acts by forming tubules structures that increase the size exclusion limit (SEL) of plasmodesmata, thereby allowing viral ribonucleocapsids to spread directly to neighboring cells. This chain is Movement protein, found in Cauliflower mosaic virus (strain W260) (CaMV).